The sequence spans 161 residues: Phosphopantetheine adenylyltransferase (161 aa).

Thr9 provides a ligand contact to substrate. ATP contacts are provided by residues Thr9 to Phe10 and His17. Lys41, Leu73, and Arg87 together coordinate substrate. ATP is bound by residues Gly88–Arg90, Glu98, and Trp123–Thr129.

This sequence belongs to the bacterial CoaD family. Homohexamer. Requires Mg(2+) as cofactor.

It is found in the cytoplasm. The catalysed reaction is (R)-4'-phosphopantetheine + ATP + H(+) = 3'-dephospho-CoA + diphosphate. It functions in the pathway cofactor biosynthesis; coenzyme A biosynthesis; CoA from (R)-pantothenate: step 4/5. Functionally, reversibly transfers an adenylyl group from ATP to 4'-phosphopantetheine, yielding dephospho-CoA (dPCoA) and pyrophosphate. The chain is Phosphopantetheine adenylyltransferase from Actinobacillus succinogenes (strain ATCC 55618 / DSM 22257 / CCUG 43843 / 130Z).